Reading from the N-terminus, the 190-residue chain is Large ribosomal subunit protein bL17 (190 aa).

A disordered region spans residues 128–190; that stretch reads KKTAGRKAAQ…VEENNEQNKA (63 aa). The span at 143 to 154 shows a compositional bias: low complexity; that stretch reads ALAPAEETPAPT. A compositionally biased stretch (acidic residues) spans 179–190; it reads LAVEENNEQNKA.

This sequence belongs to the bacterial ribosomal protein bL17 family. As to quaternary structure, part of the 50S ribosomal subunit. Contacts protein L32.

The polypeptide is Large ribosomal subunit protein bL17 (Salinispora tropica (strain ATCC BAA-916 / DSM 44818 / JCM 13857 / NBRC 105044 / CNB-440)).